The primary structure comprises 177 residues: Interleukin-1 receptor antagonist protein (177 aa).

The first 25 residues, 1–25 (MEIRRRSVRHLISLLLFLFYSETAC), serve as a signal peptide directing secretion. An intrachain disulfide couples C91 to C141. Residue N109 is glycosylated (N-linked (GlcNAc...) asparagine).

It belongs to the IL-1 family.

The protein localises to the secreted. Functionally, anti-inflammatory antagonist of interleukin-1 family of proinflammatory cytokines such as interleukin-1beta/IL1B and interleukin-1alpha/IL1A. Protects from immune dysregulation and uncontrolled systemic inflammation triggered by IL1 for a range of innate stimulatory agents such as pathogens. This is Interleukin-1 receptor antagonist protein (IL1RN) from Equus caballus (Horse).